Consider the following 868-residue polypeptide: Translation initiation factor IF-2 (868 aa).

A compositionally biased stretch (basic and acidic residues) spans 103–183 (RSELPETSDR…RQAAAERETV (81 aa)). The interval 103 to 274 (RSELPETSDR…GRPMLMPEQK (172 aa)) is disordered. The segment covering 190–207 (VAAPPIPRPAPEPRPPAR) has biased composition (pro residues). Residues 213-254 (PKAEAPRAHPAERETEARGDKRSAGLSRKDEYRELQGDDFRK) are compositionally biased toward basic and acidic residues. Residues 255–264 (GGGKRKKPKT) show a composition bias toward basic residues. Positions 369-538 (PRPPVVTIMG…LVQAEVLELK (170 aa)) constitute a tr-type G domain. The interval 378 to 385 (GHVDHGKT) is G1. Position 378–385 (378–385 (GHVDHGKT)) interacts with GTP. The G2 stretch occupies residues 403–407 (GITQH). A G3 region spans residues 424 to 427 (DTPG). Residues 424-428 (DTPGH) and 478-481 (NKMD) contribute to the GTP site. The tract at residues 478–481 (NKMD) is G4. The interval 514 to 516 (SAK) is G5.

The protein belongs to the TRAFAC class translation factor GTPase superfamily. Classic translation factor GTPase family. IF-2 subfamily.

Its subcellular location is the cytoplasm. In terms of biological role, one of the essential components for the initiation of protein synthesis. Protects formylmethionyl-tRNA from spontaneous hydrolysis and promotes its binding to the 30S ribosomal subunits. Also involved in the hydrolysis of GTP during the formation of the 70S ribosomal complex. The chain is Translation initiation factor IF-2 from Methylococcus capsulatus (strain ATCC 33009 / NCIMB 11132 / Bath).